The following is a 98-amino-acid chain: Acylphosphatase (98 aa).

In terms of domain architecture, Acylphosphatase-like spans 12–98 (TYYVRVRGVV…DKRFERFQQH (87 aa)). Residues Arg-27 and Asn-45 contribute to the active site.

The protein belongs to the acylphosphatase family.

It carries out the reaction an acyl phosphate + H2O = a carboxylate + phosphate + H(+). This is Acylphosphatase (acyP) from Burkholderia thailandensis (strain ATCC 700388 / DSM 13276 / CCUG 48851 / CIP 106301 / E264).